An 81-amino-acid chain; its full sequence is Omega-conotoxin-like 3 (81 aa).

The signal sequence occupies residues 1-22 (MKLTCMMIVAVLFLTASIFITA). Residues 23–51 (DNSRNGIENLPRMRRHEMKKPKASKLNKR) constitute a propeptide that is removed on maturation. 3 cysteine pairs are disulfide-bonded: Cys-53–Cys-71, Cys-60–Cys-75, and Cys-70–Cys-79.

This sequence belongs to the conotoxin O1 superfamily. Expressed by the venom duct.

It localises to the secreted. In terms of biological role, omega-conotoxins act at presynaptic membranes, they bind and block voltage-gated calcium channels (Cav). This chain is Omega-conotoxin-like 3, found in Conus imperialis (Imperial cone).